Consider the following 298-residue polypeptide: Cobalt-precorrin-5B C(1)-methyltransferase (298 aa).

The protein belongs to the CbiD family.

It carries out the reaction Co-precorrin-5B + S-adenosyl-L-methionine = Co-precorrin-6A + S-adenosyl-L-homocysteine. It participates in cofactor biosynthesis; adenosylcobalamin biosynthesis; cob(II)yrinate a,c-diamide from sirohydrochlorin (anaerobic route): step 6/10. Functionally, catalyzes the methylation of C-1 in cobalt-precorrin-5B to form cobalt-precorrin-6A. This Archaeoglobus fulgidus (strain ATCC 49558 / DSM 4304 / JCM 9628 / NBRC 100126 / VC-16) protein is Cobalt-precorrin-5B C(1)-methyltransferase.